The sequence spans 132 residues: Ribosome-binding factor A (132 aa).

This sequence belongs to the RbfA family. In terms of assembly, monomer. Binds 30S ribosomal subunits, but not 50S ribosomal subunits or 70S ribosomes.

It localises to the cytoplasm. Its function is as follows. One of several proteins that assist in the late maturation steps of the functional core of the 30S ribosomal subunit. Associates with free 30S ribosomal subunits (but not with 30S subunits that are part of 70S ribosomes or polysomes). Required for efficient processing of 16S rRNA. May interact with the 5'-terminal helix region of 16S rRNA. This is Ribosome-binding factor A from Edwardsiella ictaluri (strain 93-146).